Reading from the N-terminus, the 522-residue chain is Transactivator/viroplasmin protein (522 aa).

Basic and acidic residues predominate over residues 487 to 500 (KDASTDRGTTDKDG). Residues 487 to 522 (KDASTDRGTTDKDGPPPTRSIVEKEDVPTTSSKQVD) form a disordered region.

This sequence belongs to the caulimoviridae viroplasmin family.

Its subcellular location is the host cytoplasm. Enhances the ribosomal termination-reinitiation event leading to the translation of major open reading frames on the polycistronic viral RNAs. The polypeptide is Transactivator/viroplasmin protein (Arabidopsis thaliana (Mouse-ear cress)).